Reading from the N-terminus, the 506-residue chain is MEAEMLYSALALTFAIFMVYRILSNSQEKSSLIKLPPSPPGWLPVIGHVHLMKNLLHRTLYDFSQKLGPIFSLRFGTRLVVVVSSSSLVEECFTKYDIVLANRPQPSVDRRSLGFSTTSVIGAPYGDHWRNLRKLCDLEVFAPTRLASFLSIRLDERDRMISSLYKISSAGFAKVNLETKIVELTFNNIMRMVAGKRYYGEEAEDDEEAKRFRDLTKEALELTSASNPGEIFPILRWLGFNGLEKKLAVHARKTDEFMQGLLDEHRRGERQNTMVDHLLSLQESQPEYYTDEIITGLIVALIIAGTDASVVTTEWAMSLILNHPQVLEKARKELDTLVGHERMVDEHDLPKLRYLHCIVLETLRLFPSVPTLVPHEPSEDCKIGGYNVPKGTMILVNAWAIHRDPKVWDDPLSFKPDRFETMEVETHKLLPFGMGRRACPGAGLAQKFVGLALGSLIQCFEWERMSAEKIDLNEGSGITLPKAKTLEAMCKPRHIMERVLRQVSNV.

A helical transmembrane segment spans residues 3–23 (AEMLYSALALTFAIFMVYRIL). Heme is bound at residue cysteine 439.

This sequence belongs to the cytochrome P450 family. Requires heme as cofactor. Expressed in seeds.

The protein localises to the membrane. The catalysed reaction is (+)-piperitol + reduced [NADPH--hemoprotein reductase] + O2 = (+)-sesamin + oxidized [NADPH--hemoprotein reductase] + 2 H2O + H(+). It catalyses the reaction (+)-pinoresinol + reduced [NADPH--hemoprotein reductase] + O2 = (+)-piperitol + oxidized [NADPH--hemoprotein reductase] + 2 H2O + H(+). Involved in the biosynthesis of (+)-sesamin, a furofuran class lignan. Functions in a dual catalytic mode. Catalyzes the synthesis of (+)-sesamin from (+)- pinoresinol by formation of two successive methylenedioxy bridges on (+)-pinoresinol and (+)-piperitol, respectively. This chain is (+)-piperitol/(+)-sesamin synthase CYP81Q2, found in Sesamum radiatum (Black benniseed).